Here is a 2188-residue protein sequence, read N- to C-terminus: Tiggrin (2188 aa).

The signal sequence occupies residues 1–18 (MRALGGITLLLAVAICQG). Coiled coils occupy residues 570–635 (SRLE…EHIK), 1009–1050 (LKNL…EIES), 1312–1343 (TFVE…EIEE), and 1613–1641 (KQQR…AQYH). The tract at residues 1984 to 2188 (IFSKDRGDQP…FWEKLKEKLG (205 aa)) is disordered. The segment covering 1985–1998 (FSKDRGDQPPHTYD) has biased composition (basic and acidic residues). A Cell attachment site motif is present at residues 1989-1991 (RGD). Residues 2000-2009 (SFVEGDEPGL) are compositionally biased toward acidic residues. Residues 2016–2033 (PRPPNPAPIVSTPKPPLP) show a composition bias toward pro residues. 2 stretches are compositionally biased toward low complexity: residues 2057–2077 (GSAS…ASAS) and 2091–2101 (QQEVDLGQQQQ). A compositionally biased stretch (polar residues) spans 2115–2139 (GQQTQVEDTDWNQQAEDLGQQQQVQ). Positions 2148 to 2165 (QTQGHSSSSNSRSQPLQQ) are enriched in low complexity. Positions 2179 to 2188 (FWEKLKEKLG) are enriched in basic and acidic residues.

Post-translationally, O-glycosylation by pgant3 is required for proper secretion and localization to the basal cell layer interface during wing development. As to expression, in embryos, expressed in the apodemes (muscle attachment sites) of the major longitudinal muscles 4, 6, 7, 12 and 13 and the wide dorsal oblique muscles 9 and 10, in hemocytes, in fat body cells, in basement membranes surrounding the gut and in the commissures of the ventral nerve cord. Expressed in larval imaginal wing disk and in pupal wing. In adult flies, expressed in the jump muscle (at protein level).

Its subcellular location is the secreted. It is found in the extracellular space. The protein resides in the extracellular matrix. Functionally, functions as a ligand for integrin alpha-PS2/beta-PS. Required in larvae for proper muscle structure and function. Involved in the regulation of cell adhesion during wing development. The polypeptide is Tiggrin (Drosophila melanogaster (Fruit fly)).